Consider the following 84-residue polypeptide: Small ribosomal subunit protein bS20 (84 aa).

It belongs to the bacterial ribosomal protein bS20 family.

Its function is as follows. Binds directly to 16S ribosomal RNA. The protein is Small ribosomal subunit protein bS20 of Ligilactobacillus salivarius (strain UCC118) (Lactobacillus salivarius).